Reading from the N-terminus, the 159-residue chain is MAIRYVRKIGDEVLRKKAKPVTEINSHILTILEDMAQTMYLNDGVGLAANQIGVLRRLVVIDVGEGLLELINPEIVYEEGEQVGAEGCLSIPGVVGEVKRPKKVKVKYLDREGKEREIEGEDLLARALCHEIDHLNGVLFIDKAIRFLDEEEKEQVKEV.

Residues Cys88 and His130 each coordinate Fe cation. The active site involves Glu131. His134 contacts Fe cation.

It belongs to the polypeptide deformylase family. The cofactor is Fe(2+).

It catalyses the reaction N-terminal N-formyl-L-methionyl-[peptide] + H2O = N-terminal L-methionyl-[peptide] + formate. Its function is as follows. Removes the formyl group from the N-terminal Met of newly synthesized proteins. Requires at least a dipeptide for an efficient rate of reaction. N-terminal L-methionine is a prerequisite for activity but the enzyme has broad specificity at other positions. This Thermoanaerobacter pseudethanolicus (strain ATCC 33223 / 39E) (Clostridium thermohydrosulfuricum) protein is Peptide deformylase.